Here is a 171-residue protein sequence, read N- to C-terminus: CASP-like protein 5A2 (171 aa).

Residues 1–39 (MDGSAHLRDPPGPAVLRWRLEDMHIIPGTSGSLALRICQ) lie on the Cytoplasmic side of the membrane. A helical transmembrane segment spans residues 40 to 60 (FSAAIVSFSVMISAANFSSVT). Alanine 61 is a topological domain (extracellular). The helical transmembrane segment at 62–82 (FCFLVAAMVLQCMWSLSVATI) threads the bilayer. Residues 83 to 106 (EGYAMLVGRSLRDSPLLSLFAVGD) lie on the Cytoplasmic side of the membrane. Residues 107-127 (WVTAVITFAGACASAGIAVLV) form a helical membrane-spanning segment. The Extracellular portion of the chain corresponds to 128 to 148 (GRDIHRGCDVNFCGRYAAAAG). Residues 149–169 (MAFLSWLLISTSFLFTFWLLA) traverse the membrane as a helical segment. Residues 170–171 (TR) are Cytoplasmic-facing.

Belongs to the Casparian strip membrane proteins (CASP) family. As to quaternary structure, homodimer and heterodimers.

It localises to the cell membrane. The sequence is that of CASP-like protein 5A2 from Pteridium aquilinum subsp. aquilinum (Bracken fern).